The sequence spans 201 residues: 3-isopropylmalate dehydratase small subunit (201 aa).

It belongs to the LeuD family. LeuD type 1 subfamily. In terms of assembly, heterodimer of LeuC and LeuD.

It carries out the reaction (2R,3S)-3-isopropylmalate = (2S)-2-isopropylmalate. It functions in the pathway amino-acid biosynthesis; L-leucine biosynthesis; L-leucine from 3-methyl-2-oxobutanoate: step 2/4. Catalyzes the isomerization between 2-isopropylmalate and 3-isopropylmalate, via the formation of 2-isopropylmaleate. This Nitrobacter hamburgensis (strain DSM 10229 / NCIMB 13809 / X14) protein is 3-isopropylmalate dehydratase small subunit.